A 382-amino-acid chain; its full sequence is Serine protease 23 (382 aa).

An N-terminal signal peptide occupies residues 1 to 22 (MAGIPGLFILLVLLCVFMQVSP). Asparagine 92 carries an N-linked (GlcNAc...) asparagine glycan. Cysteine 159 and cysteine 175 are disulfide-bonded. Histidine 174 acts as the Charge relay system in catalysis. Asparagine 206 carries N-linked (GlcNAc...) asparagine glycosylation. Residues aspartate 239 and serine 315 each act as charge relay system in the active site.

This sequence belongs to the peptidase S1 family.

The protein localises to the secreted. This chain is Serine protease 23 (Prss23), found in Mus musculus (Mouse).